A 180-amino-acid chain; its full sequence is Acireductone dioxygenase (180 aa).

4 residues coordinate Fe(2+): His-97, His-99, Glu-103, and His-141. Positions 97, 99, 103, and 141 each coordinate Ni(2+).

It belongs to the acireductone dioxygenase (ARD) family. As to quaternary structure, monomer. Requires Fe(2+) as cofactor. Ni(2+) is required as a cofactor.

The enzyme catalyses 1,2-dihydroxy-5-(methylsulfanyl)pent-1-en-3-one + O2 = 3-(methylsulfanyl)propanoate + CO + formate + 2 H(+). The catalysed reaction is 1,2-dihydroxy-5-(methylsulfanyl)pent-1-en-3-one + O2 = 4-methylsulfanyl-2-oxobutanoate + formate + 2 H(+). It participates in amino-acid biosynthesis; L-methionine biosynthesis via salvage pathway; L-methionine from S-methyl-5-thio-alpha-D-ribose 1-phosphate: step 5/6. Catalyzes 2 different reactions between oxygen and the acireductone 1,2-dihydroxy-3-keto-5-methylthiopentene (DHK-MTPene) depending upon the metal bound in the active site. Fe-containing acireductone dioxygenase (Fe-ARD) produces formate and 2-keto-4-methylthiobutyrate (KMTB), the alpha-ketoacid precursor of methionine in the methionine recycle pathway. Ni-containing acireductone dioxygenase (Ni-ARD) produces methylthiopropionate, carbon monoxide and formate, and does not lie on the methionine recycle pathway. The sequence is that of Acireductone dioxygenase from Cronobacter sakazakii (Enterobacter sakazakii).